Here is a 429-residue protein sequence, read N- to C-terminus: Saccharopine dehydrogenase-like oxidoreductase (429 aa).

A2 carries the N-acetylalanine modification. Phosphoserine is present on S217.

This sequence belongs to the saccharopine dehydrogenase family.

The sequence is that of Saccharopine dehydrogenase-like oxidoreductase (SCCPDH) from Homo sapiens (Human).